The primary structure comprises 349 residues: GTPase Obg (349 aa).

The 159-residue stretch at 1–159 (MKFLDQAKVY…LWIWLRLKLI (159 aa)) folds into the Obg domain. Residues 160–327 (ADAGLIGLPN…VLRALMRVVQ (168 aa)) form the OBG-type G domain. Residues 166–173 (GLPNAGKS), 191–195 (FTTLH), 212–215 (DIPG), 279–282 (SQID), and 308–310 (SSA) contribute to the GTP site. 2 residues coordinate Mg(2+): Ser-173 and Thr-193.

It belongs to the TRAFAC class OBG-HflX-like GTPase superfamily. OBG GTPase family. As to quaternary structure, monomer. Requires Mg(2+) as cofactor.

It localises to the cytoplasm. In terms of biological role, an essential GTPase which binds GTP, GDP and possibly (p)ppGpp with moderate affinity, with high nucleotide exchange rates and a fairly low GTP hydrolysis rate. Plays a role in control of the cell cycle, stress response, ribosome biogenesis and in those bacteria that undergo differentiation, in morphogenesis control. The sequence is that of GTPase Obg from Chelativorans sp. (strain BNC1).